Reading from the N-terminus, the 115-residue chain is Large ribosomal subunit protein bL20c (115 aa).

This sequence belongs to the bacterial ribosomal protein bL20 family.

Its subcellular location is the plastid. It is found in the chloroplast. Its function is as follows. Binds directly to 23S ribosomal RNA and is necessary for the in vitro assembly process of the 50S ribosomal subunit. It is not involved in the protein synthesizing functions of that subunit. This Gnetum parvifolium (Small-leaved jointfir) protein is Large ribosomal subunit protein bL20c.